Here is a 417-residue protein sequence, read N- to C-terminus: Sulfate adenylyltransferase (417 aa).

Residues 1–10 (MTSITANQKP) show a composition bias toward polar residues. A disordered region spans residues 1–20 (MTSITANQKPSKLVPPHGSP).

This sequence belongs to the sulfate adenylyltransferase family.

It catalyses the reaction sulfate + ATP + H(+) = adenosine 5'-phosphosulfate + diphosphate. It functions in the pathway sulfur metabolism; hydrogen sulfide biosynthesis; sulfite from sulfate: step 1/3. This Psychrobacter arcticus (strain DSM 17307 / VKM B-2377 / 273-4) protein is Sulfate adenylyltransferase.